Consider the following 156-residue polypeptide: 1-methylthio-D-xylulose 5-phosphate methylsulfurylase (156 aa).

The Cupin type-2 domain occupies Tyr-55–Met-122. Residues Glu-67, His-69, His-73, and His-107 each coordinate Mn(2+). The active site involves Cys-121.

It carries out the reaction S-methyl-1-thio-D-xylulose 5-phosphate + glutathione = S-(methylsulfanyl)glutathione + 1-deoxy-D-xylulose 5-phosphate. The enzyme catalyses S-(methylsulfanyl)glutathione + AH2 = methanethiol + glutathione + A. It functions in the pathway amino-acid biosynthesis; L-methionine biosynthesis via salvage pathway. The protein operates within metabolic intermediate biosynthesis; 1-deoxy-D-xylulose 5-phosphate biosynthesis. In terms of biological role, catalyzes the formation of S-(methylsulfanyl)glutathione and 1-deoxy-D-xylulose 5-phosphate (DXP) from 1-methylthioxylulose 5-phosphate (MTXu-5P). The S-(methylsulfanyl)glutathione is reductively cleaved to relase methanethiol in a second reaction. Involved in the MTA-isoprenoid shunt of the methionine salvage pathway. In Rhodospirillum rubrum (strain ATCC 11170 / ATH 1.1.1 / DSM 467 / LMG 4362 / NCIMB 8255 / S1), this protein is 1-methylthio-D-xylulose 5-phosphate methylsulfurylase.